The chain runs to 583 residues: Zinc finger protein 277 (583 aa).

2 C2H2-type zinc fingers span residues 351-375 and 482-508; these read LQCLYCEKTFRDKNTLKDHMRKKQH and HQCKCYSCHVKFKSKADLRTHMEDTKH.

The protein belongs to the ZNF277 family. In terms of assembly, interacts (via zinc-finger domains) with RPS2/40S ribosomal protein S2, perhaps as nascent RPS2 is synthesized during translation; the interaction is direct; the interaction is extra-ribosomal. Interaction with RPS2 competes with the binding of RPS2 to protein arginine methyltransferase PRMT3. Interacts with Polycomb group (PcG) complex protein BMI1. May be part of a complex including at least ZNF277, BMI1 and RNF2/RING2.

It localises to the nucleus. The protein resides in the cytoplasm. Its subcellular location is the nucleolus. The protein localises to the chromosome. Its function is as follows. Probable transcription factor. Involved in modulation of cellular senescence; represses transcription of the tumor suppressor gene INK4A/ARF, perhaps acting via the Polycomb group (PcG) complex PRC1. This chain is Zinc finger protein 277, found in Mus musculus (Mouse).